A 215-amino-acid chain; its full sequence is 3,4-dihydroxy-2-butanone 4-phosphate synthase (215 aa).

D-ribulose 5-phosphate-binding positions include 38-39 (RE), Asp-43, 151-155 (RRGHT), and Glu-175. Glu-39 provides a ligand contact to Mg(2+). His-154 contacts Mg(2+).

The protein belongs to the DHBP synthase family. In terms of assembly, homodimer. Mg(2+) serves as cofactor. The cofactor is Mn(2+).

The enzyme catalyses D-ribulose 5-phosphate = (2S)-2-hydroxy-3-oxobutyl phosphate + formate + H(+). The protein operates within cofactor biosynthesis; riboflavin biosynthesis; 2-hydroxy-3-oxobutyl phosphate from D-ribulose 5-phosphate: step 1/1. Catalyzes the conversion of D-ribulose 5-phosphate to formate and 3,4-dihydroxy-2-butanone 4-phosphate. This is 3,4-dihydroxy-2-butanone 4-phosphate synthase from Haemophilus influenzae (strain 86-028NP).